The sequence spans 113 residues: MTDTHSIAQPFEAEVSPANNRQLTVSYASRYPDYSRIPAITLKGQWLEAAGFATGTAIDVKVMEGCIVLTAQPPAAEESELMQSLRQVCKLSARKQRQVQEFIGVIAGKQKVA.

Residues serine 29–proline 74 form the SpoVT-AbrB domain.

This sequence belongs to the SymE family.

It is found in the cytoplasm. Involved in the degradation and recycling of damaged RNA. It is itself a target for degradation by the ATP-dependent protease Lon. The sequence is that of Endoribonuclease SymE from Escherichia coli O1:K1 / APEC.